The primary structure comprises 410 residues: Trifunctional NAD biosynthesis/regulator protein NadR (410 aa).

The HTH cro/C1-type domain occupies 7–62; that stretch reads LKTAIKQQGCTLQQVADASGMTKGYLSQLLNAKIKSPSAQKLEALHRFLGLEFPRQ. The segment at residues 18–37 is a DNA-binding region (H-T-H motif); sequence LQQVADASGMTKGYLSQLLN. The interval 63 to 229 is nicotinamide mononucleotide adenylyltransferase; it reads KKTIGVVFGK…EYIPTEVKPF (167 aa). NAD(+)-binding positions include 70-73, H77, R104, 144-157, 177-179, 204-206, 259-261, and 294-297; these read FGKF, EEGM…WDVW, TSE, MSI, SAW, and YIDF. Residues 230-410 form a ribosylnicotinamide kinase region; it reads FVRTVAILGG…LVREMMGEQR (181 aa).

The protein in the central section; belongs to the bacterial NMN adenylyltransferase family. In the C-terminal section; belongs to the bacterial RNK family. In terms of assembly, homotetramer.

The protein localises to the cell membrane. Its subcellular location is the cytoplasm. The catalysed reaction is beta-nicotinamide D-ribonucleotide + ATP + H(+) = diphosphate + NAD(+). It carries out the reaction beta-nicotinamide D-riboside + ATP = beta-nicotinamide D-ribonucleotide + ADP + H(+). Its pathway is cofactor biosynthesis; NAD(+) biosynthesis [regulation]. It participates in cofactor biosynthesis; NAD(+) biosynthesis; NAD(+) from nicotinamide D-ribonucleotide: step 1/1. Feed-back regulated by NAD. A high level of NAD causes NadR to lose enzymatic activity and repress several NAD synthetic genes; conversely, a low NAD level activates the assimilatory enzymatic activities and leads to derepression of biosynthetic genes. Its function is as follows. This enzyme has three activities: DNA binding, nicotinamide mononucleotide (NMN) adenylyltransferase and ribosylnicotinamide (RN) kinase. The DNA-binding domain binds to the nadB operator sequence in an NAD- and ATP-dependent manner. As NAD levels increase within the cell, the affinity of NadR for the nadB operator regions of nadA, nadB, and pncB increases, repressing the transcription of these genes. The RN kinase activity catalyzes the phosphorylation of RN to form nicotinamide ribonucleotide. The NMN adenylyltransferase activity catalyzes the transfer of the AMP moiety of ATP to nicotinamide ribonucleotide to form NAD(+). The NMN adenylyltransferase domain also functions as the NAD and ATP sensor. In Escherichia coli (strain K12), this protein is Trifunctional NAD biosynthesis/regulator protein NadR (nadR).